Consider the following 417-residue polypeptide: Glutamyl-tRNA reductase (417 aa).

Substrate is bound by residues 49–52, Ser-107, 112–114, and Gln-118; these read TCNR and EEQ. Cys-50 serves as the catalytic Nucleophile. 187 to 192 contacts NADP(+); sequence GTGEVS.

Belongs to the glutamyl-tRNA reductase family. As to quaternary structure, homodimer.

It catalyses the reaction (S)-4-amino-5-oxopentanoate + tRNA(Glu) + NADP(+) = L-glutamyl-tRNA(Glu) + NADPH + H(+). The protein operates within porphyrin-containing compound metabolism; protoporphyrin-IX biosynthesis; 5-aminolevulinate from L-glutamyl-tRNA(Glu): step 1/2. Functionally, catalyzes the NADPH-dependent reduction of glutamyl-tRNA(Glu) to glutamate 1-semialdehyde (GSA). This chain is Glutamyl-tRNA reductase, found in Cenarchaeum symbiosum (strain A).